The chain runs to 636 residues: Chaperone protein HtpG (636 aa).

Positions 1 to 342 (MSGETLEFQA…AHDLSLNISR (342 aa)) are a; substrate-binding. Residues 343-558 (ELLQQDRQIQ…AHDVTPTLEK (216 aa)) are b. Positions 559 to 636 (MYRAMGHEVP…ILAERLARTL (78 aa)) are c.

The protein belongs to the heat shock protein 90 family. Homodimer.

It is found in the cytoplasm. In terms of biological role, molecular chaperone. Has ATPase activity. This chain is Chaperone protein HtpG, found in Salinispora arenicola (strain CNS-205).